Reading from the N-terminus, the 94-residue chain is Small ribosomal subunit protein uS17 (94 aa).

This sequence belongs to the universal ribosomal protein uS17 family. In terms of assembly, part of the 30S ribosomal subunit.

Functionally, one of the primary rRNA binding proteins, it binds specifically to the 5'-end of 16S ribosomal RNA. The chain is Small ribosomal subunit protein uS17 from Streptomyces avermitilis (strain ATCC 31267 / DSM 46492 / JCM 5070 / NBRC 14893 / NCIMB 12804 / NRRL 8165 / MA-4680).